The sequence spans 30 residues: Trypsin inhibitor 2 (30 aa).

3 disulfides stabilise this stretch: C3-C20, C10-C22, and C16-C29.

This sequence belongs to the protease inhibitor I7 (squash-type serine protease inhibitor) family.

Its subcellular location is the secreted. Inhibits trypsin. The sequence is that of Trypsin inhibitor 2 from Luffa aegyptiaca (Sponge gourd).